The following is a 505-amino-acid chain: L-carnitine/gamma-butyrobetaine antiporter (505 aa).

The next 12 helical transmembrane spans lie at 10–30 (IEPK…WLTV), 51–71 (WGWA…WLVF), 92–112 (IFMM…SIEI), 143–163 (GPLP…FFFV), 195–215 (FYLV…TPLV), 231–251 (LDAI…ACGL), 263–283 (SYLS…SFIM), 316–336 (WTVF…IFLA), 347–367 (LCFG…TVLG), 403–423 (LSTA…VTLI), 446–466 (LLVR…LLAL), and 475–495 (AIIA…LSFI).

The protein belongs to the BCCT transporter (TC 2.A.15) family. CaiT subfamily. Homotrimer.

The protein localises to the cell inner membrane. It catalyses the reaction 4-(trimethylamino)butanoate(in) + (R)-carnitine(out) = 4-(trimethylamino)butanoate(out) + (R)-carnitine(in). It participates in amine and polyamine metabolism; carnitine metabolism. Its function is as follows. Catalyzes the exchange of L-carnitine for gamma-butyrobetaine. The polypeptide is L-carnitine/gamma-butyrobetaine antiporter (Salmonella typhi).